Here is a 325-residue protein sequence, read N- to C-terminus: Diacylglycerol acyltransferase/mycolyltransferase Ag85B (325 aa).

The first 40 residues, 1-40 (MTDVSRKIRAWGRRLMIGTAAAVVLPGLVGLAGGAATAGA), serve as a signal peptide directing secretion. A substrate-binding site is contributed by 82 to 83 (LR). The tract at residues 98–108 (FEWYYQSGLSI) is fibronectin-binding. A disulfide bond links Cys127 and Cys132. Residues Ser166 and Asp194 each coordinate substrate. Residue Ser166 is the Nucleophile of the active site. Glu270 is an active-site residue. Residues 272–275 (FVRS), Lys279, and 302–304 (HSW) each bind substrate. His302 is a catalytic residue.

The protein belongs to the mycobacterial A85 antigen family.

The protein resides in the secreted. The catalysed reaction is 2 alpha,alpha'-trehalose 6-mycolate = alpha,alpha'-trehalose 6,6'-bismycolate + alpha,alpha-trehalose. It catalyses the reaction an acyl-CoA + a 1,2-diacyl-sn-glycerol = a triacyl-sn-glycerol + CoA. Functionally, the antigen 85 proteins (FbpA, FbpB, FbpC) are responsible for the high affinity of mycobacteria for fibronectin, a large adhesive glycoprotein, which facilitates the attachment of Mycobacteria to murine alveolar macrophages (AMs). They also help to maintain the integrity of the cell wall by catalyzing the transfer of mycolic acids to cell wall arabinogalactan and through the synthesis of alpha,alpha-trehalose dimycolate (TDM, cord factor). They catalyze the transfer of a mycoloyl residue from one molecule of alpha,alpha-trehalose monomycolate (TMM) to another TMM, leading to the formation of TDM. The sequence is that of Diacylglycerol acyltransferase/mycolyltransferase Ag85B (fbpB) from Mycobacterium bovis (strain BCG / Pasteur 1173P2).